Reading from the N-terminus, the 491-residue chain is Glutamate--tRNA ligase (491 aa).

Positions 9 to 19 (PSPTGTPHVGM) match the 'HIGH' region motif. Positions 253 to 257 (KLSKR) match the 'KMSKS' region motif. An ATP-binding site is contributed by lysine 256.

The protein belongs to the class-I aminoacyl-tRNA synthetase family. Glutamate--tRNA ligase type 1 subfamily. Monomer.

The protein localises to the cytoplasm. It catalyses the reaction tRNA(Glu) + L-glutamate + ATP = L-glutamyl-tRNA(Glu) + AMP + diphosphate. Functionally, catalyzes the attachment of glutamate to tRNA(Glu) in a two-step reaction: glutamate is first activated by ATP to form Glu-AMP and then transferred to the acceptor end of tRNA(Glu). This chain is Glutamate--tRNA ligase, found in Leifsonia xyli subsp. xyli (strain CTCB07).